Reading from the N-terminus, the 782-residue chain is Tripartite terminase subunit 1 (782 aa).

The C3H1-type zinc finger occupies 190 to 218; sequence CLQCYEELAAVPNQGRSILKRLRGLLCDH. 666-673 contributes to the ATP binding site; that stretch reads YNEAFGKE. The segment covering 727–740 has biased composition (pro residues); it reads APPPPAAPSPPPAE. Residues 727-754 form a disordered region; the sequence is APPPPAAPSPPPAEPATTAGASRKRPAV.

This sequence belongs to the herpesviridae TRM1 protein family. As to quaternary structure, associates with TRM2 and TRM3 to form the tripartite terminase complex. Interacts with portal protein.

The protein resides in the host nucleus. In terms of biological role, component of the molecular motor that translocates viral genomic DNA in empty capsid during DNA packaging. Forms a tripartite terminase complex together with TRM2 and TRM3 in the host cytoplasm. Once the complex reaches the host nucleus, it interacts with the capsid portal vertex. This portal forms a ring in which genomic DNA is translocated into the capsid. TRM1 carries an endonuclease activity that plays an important role for the cleavage of concatemeric viral DNA into unit length genomes. This chain is Tripartite terminase subunit 1, found in Tupaiid herpesvirus (strain 2) (TuHV-2).